The chain runs to 495 residues: MSSSRLIKCLSSNNYIVRSFSKSSIPTTPTPDFPGEYKEPIVKTQIPGPQSKALIERLNKLQDPRAAHFFADYANSRGNYISDVDGNILLDLYCQIASIPIGYNNPELIKAAKSDRWVSAIINRPSLGVLPPKDWPALIENSFMQVSPKGLNQVFTAMCGSCANECAYKAVFMHYQHVKRGGKPFTPEELSSCMKNQEPGSPSLSILSFKKGFHGRTFGTLSTTRSKAIHKLDIPAFDWPAATFPDLKYPLAEHAKENREIEDRCLQEVEQLIKTWHIPVAGIIVEPIQAEGGDNYATPYFFQGLRDITKKHGVSMIVDEVQTGMGATGKFWAHEHWNLTSPPDIVTFSKKMQAAGFYHNLDYRPSESYRNFNTWMGDPVRALELEVVIGEIKKNHLLDNVVITGNYLKDGLFDIAARYPGLIQNIRGEGTFLAIDFPTPAERDRVISHIRLLGVEMGGCGERSIRFRPMLVCQPSHINQFLNRFDQTMKELYKN.

160-161 (GS) contacts pyridoxal 5'-phosphate. Residue Arg-216 coordinates substrate. Lys-350 bears the N6-(pyridoxal phosphate)lysine mark. Thr-374 is a pyridoxal 5'-phosphate binding site.

It belongs to the class-III pyridoxal-phosphate-dependent aminotransferase family. Homodimer. Pyridoxal 5'-phosphate is required as a cofactor.

It carries out the reaction 4-aminobutanoate + 2-oxoglutarate = succinate semialdehyde + L-glutamate. This Dictyostelium discoideum (Social amoeba) protein is 4-aminobutyrate aminotransferase (gabT).